The sequence spans 154 residues: 6,7-dimethyl-8-ribityllumazine synthase (154 aa).

5-amino-6-(D-ribitylamino)uracil is bound by residues Phe23, Ala57 to Glu59, and Ala81 to Ile83. Gly86 to Thr87 is a binding site for (2S)-2-hydroxy-3-oxobutyl phosphate. His89 serves as the catalytic Proton donor. Residue Phe114 coordinates 5-amino-6-(D-ribitylamino)uracil. Arg128 is a (2S)-2-hydroxy-3-oxobutyl phosphate binding site.

The protein belongs to the DMRL synthase family. As to quaternary structure, forms an icosahedral capsid composed of 60 subunits, arranged as a dodecamer of pentamers.

The enzyme catalyses (2S)-2-hydroxy-3-oxobutyl phosphate + 5-amino-6-(D-ribitylamino)uracil = 6,7-dimethyl-8-(1-D-ribityl)lumazine + phosphate + 2 H2O + H(+). It functions in the pathway cofactor biosynthesis; riboflavin biosynthesis; riboflavin from 2-hydroxy-3-oxobutyl phosphate and 5-amino-6-(D-ribitylamino)uracil: step 1/2. In terms of biological role, catalyzes the formation of 6,7-dimethyl-8-ribityllumazine by condensation of 5-amino-6-(D-ribitylamino)uracil with 3,4-dihydroxy-2-butanone 4-phosphate. This is the penultimate step in the biosynthesis of riboflavin. This is 6,7-dimethyl-8-ribityllumazine synthase from Acidithiobacillus ferrooxidans (strain ATCC 23270 / DSM 14882 / CIP 104768 / NCIMB 8455) (Ferrobacillus ferrooxidans (strain ATCC 23270)).